A 336-amino-acid polypeptide reads, in one-letter code: Terephthalate 1,2-dioxygenase, reductase component 2 (336 aa).

In terms of domain architecture, 2Fe-2S ferredoxin-type spans 3-91 (HQIHIHDSDI…DIRIHPSSFR (89 aa)). 4 residues coordinate [2Fe-2S] cluster: Cys-37, Cys-42, Cys-45, and Cys-75. The FAD-binding FR-type domain occupies 98 to 197 (RKRFTAKVYS…ELPFGSIALK (100 aa)).

Monomer. Part of a multicomponent enzyme system composed of a reductase (TphA1I or TphA1II) and a two-subunit oxygenase component (TphA2I or TphA2II and TphA3I or TphA3II). The cofactor is FAD. Requires [2Fe-2S] cluster as cofactor.

It carries out the reaction terephthalate + NADH + O2 + H(+) = (3S,4R)-3,4-dihydroxycyclohexa-1,5-diene-1,4-dicarboxylate + NAD(+). Its function is as follows. Component of the terephthalate 1,2-dioxygenase multicomponent enzyme system which catalyzes the dioxygenation of terephthalate (TER/TPA) to 1,2-dihydroxy-3,5-cyclohexadiene-1,4-dicarboxylic acid (DCD). TphA1 probably reduces TphA2A3. It can also use 2,5-dicarboxypyridine (PDC) and 1,4-napthalenedicarboxylic acid (NDC) as substrates, and preferentially uses NADPH which is the physiological electron donor. This Comamonas sp protein is Terephthalate 1,2-dioxygenase, reductase component 2 (tphA1II).